The sequence spans 530 residues: Probable phosphoacetylglucosamine mutase (530 aa).

Serine 62 (phosphoserine intermediate) is an active-site residue. Mg(2+)-binding residues include serine 62, aspartate 278, aspartate 280, and aspartate 282. Residues 369–371 (EPN), 481–485 (RPSGT), and arginine 490 contribute to the substrate site.

It belongs to the phosphohexose mutase family. Mg(2+) is required as a cofactor.

The catalysed reaction is N-acetyl-alpha-D-glucosamine 1-phosphate = N-acetyl-D-glucosamine 6-phosphate. Its pathway is nucleotide-sugar biosynthesis; UDP-N-acetyl-alpha-D-glucosamine biosynthesis; N-acetyl-alpha-D-glucosamine 1-phosphate from alpha-D-glucosamine 6-phosphate (route I): step 2/2. Its function is as follows. Catalyzes the conversion of GlcNAc-6-P into GlcNAc-1-P during the synthesis of uridine diphosphate/UDP-GlcNAc, which is a biosynthetic precursor of chitin and also supplies the amino sugars for N-linked oligosaccharides of glycoproteins. The chain is Probable phosphoacetylglucosamine mutase from Encephalitozoon cuniculi (strain GB-M1) (Microsporidian parasite).